A 316-amino-acid chain; its full sequence is Phospholipase A1 3 (316 aa).

An N-terminal signal peptide occupies residues 1-4 (ADDL). Residues 5 to 14 (TTLRNGTLDR) constitute a propeptide that is removed on maturation. A disulfide bridge links C20 with C103. The active-site Nucleophile is the S153. D181 acts as the Charge relay system in catalysis. Cystine bridges form between C192–C197 and C235–C240. H242 (charge relay system) is an active-site residue. 3 disulfide bridges follow: C257/C284, C258/C309, and C277/C282.

It belongs to the AB hydrolase superfamily. Lipase family. Expressed by the venom gland.

The protein resides in the secreted. It catalyses the reaction a 1,2-diacyl-sn-glycero-3-phosphocholine + H2O = a 2-acyl-sn-glycero-3-phosphocholine + a fatty acid + H(+). Catalyzes the hydrolysis of phosphatidylcholine with phospholipase A1 activity. May act as an allergen and induce hemolytic activity. This Polistes dominula (European paper wasp) protein is Phospholipase A1 3.